We begin with the raw amino-acid sequence, 843 residues long: Taste receptor type 1 member 2 (843 aa).

A signal peptide spans 1-19; that stretch reads MGPQARTLCLLSLLLHVLP. Residues 20-570 are Extracellular-facing; the sequence is KPGKLVENSD…TFLEWHEVPT (551 aa). N-linked (GlcNAc...) asparagine glycosylation is found at asparagine 87, asparagine 296, asparagine 316, asparagine 355, asparagine 372, asparagine 432, asparagine 484, asparagine 491, and asparagine 531. A helical transmembrane segment spans residues 571–591; it reads IVVAILAALGFFSTLAILFIF. The Cytoplasmic portion of the chain corresponds to 592-606; it reads WRHFQTPMVRSAGGP. A helical transmembrane segment spans residues 607–627; that stretch reads MCFLMLVPLLLAFGMVPVYVG. Residues 628-642 lie on the Extracellular side of the membrane; sequence PPTVFSCFCRQAFFT. The helical transmembrane segment at 643 to 663 threads the bilayer; the sequence is VCFSICLSCITVRSFQIVCVF. Topologically, residues 664 to 682 are cytoplasmic; it reads KMARRLPSAYSFWMRYHGP. A helical transmembrane segment spans residues 683–703; it reads YVFVAFITAIKVALVVGNMLA. The Extracellular segment spans residues 704–731; that stretch reads TTINPIGRTDPDDPNIMILSCHPNYRNG. Residues 732-752 traverse the membrane as a helical segment; it reads LLFNTSMDLLLSVLGFSFAYM. Over 753 to 764 the chain is Cytoplasmic; that stretch reads GKELPTNYNEAK. Residues 765-785 traverse the membrane as a helical segment; it reads FITLSMTFSFTSSISLCTFMS. The Extracellular portion of the chain corresponds to 786–789; sequence VHDG. Residues 790–810 traverse the membrane as a helical segment; it reads VLVTIMDLLVTVLNFLAIGLG. The Cytoplasmic segment spans residues 811-843; the sequence is YFGPKCYMILFYPERNTSAYFNSMIQGYTMRKS.

Belongs to the G-protein coupled receptor 3 family. TAS1R subfamily. Forms heterodimers with TAS1R3. In terms of tissue distribution, abundantly expressed in circumvallate and foliate papillae.

It is found in the cell membrane. Functionally, putative taste receptor. TAS1R2/TAS1R3 recognizes diverse natural and synthetic sweeteners. In Rattus norvegicus (Rat), this protein is Taste receptor type 1 member 2 (Tas1r2).